The chain runs to 301 residues: MKNFNLILVIGATASGKTRLGVELARQLEGEIISADSRQVYKGLDIGSGKDLAEYGEVPHHLIDIVEPGHEYNAFQFQQDFFEAFTYIESRNKQPILVGGTGLYVDAVVSGYEFVQLDKDLALRAELDLQPLEQVQKLLLELDAAQYEKTDLTVRPRLYRAIEIAKNKQTNPKPAKALPEIRPLYFGIQWDRKVLRKRIKTRLKERFEQGMVEEVQGLLDNGVSHEQLEYYGLEYRFVSQYIAGQIGYEEMFDRLNTAICQYAKRQETWFRRIEKHGGKIHWLQGSGDIYQQACEVLADLG.

11 to 18 (GATASGKT) contacts ATP. A substrate-binding site is contributed by 13–18 (TASGKT). The segment at 36–39 (DSRQ) is interaction with substrate tRNA.

This sequence belongs to the IPP transferase family. As to quaternary structure, monomer. The cofactor is Mg(2+).

It catalyses the reaction adenosine(37) in tRNA + dimethylallyl diphosphate = N(6)-dimethylallyladenosine(37) in tRNA + diphosphate. Functionally, catalyzes the transfer of a dimethylallyl group onto the adenine at position 37 in tRNAs that read codons beginning with uridine, leading to the formation of N6-(dimethylallyl)adenosine (i(6)A). This chain is tRNA dimethylallyltransferase 2, found in Shewanella sediminis (strain HAW-EB3).